We begin with the raw amino-acid sequence, 263 residues long: 3-deoxy-manno-octulosonate cytidylyltransferase 1 (263 aa).

The protein belongs to the KdsB family.

It is found in the cytoplasm. It carries out the reaction 3-deoxy-alpha-D-manno-oct-2-ulosonate + CTP = CMP-3-deoxy-beta-D-manno-octulosonate + diphosphate. It participates in nucleotide-sugar biosynthesis; CMP-3-deoxy-D-manno-octulosonate biosynthesis; CMP-3-deoxy-D-manno-octulosonate from 3-deoxy-D-manno-octulosonate and CTP: step 1/1. It functions in the pathway bacterial outer membrane biogenesis; lipopolysaccharide biosynthesis. In terms of biological role, activates KDO (a required 8-carbon sugar) for incorporation into bacterial lipopolysaccharide in Gram-negative bacteria. This chain is 3-deoxy-manno-octulosonate cytidylyltransferase 1, found in Burkholderia ambifaria (strain ATCC BAA-244 / DSM 16087 / CCUG 44356 / LMG 19182 / AMMD) (Burkholderia cepacia (strain AMMD)).